We begin with the raw amino-acid sequence, 601 residues long: Group B oligopeptidase PepB (601 aa).

His-386 serves as a coordination point for Zn(2+). The active site involves Glu-387. The Zn(2+) site is built by His-390 and His-393.

Belongs to the peptidase M3B family. Zn(2+) serves as cofactor.

Its subcellular location is the cytoplasm. Its function is as follows. Has oligopeptidase activity and degrades a variety of small bioactive peptides, including bradykinin, neurotensin, and peptide fragments of substance P and adrenocorticotropin. Also hydrolyzes the synthetic collagen-like substrate N-(3-[2-furyl]acryloyl)-Leu-Gly-Pro-Ala (FALGPA). This Streptococcus agalactiae serotype III (strain NEM316) protein is Group B oligopeptidase PepB (pepB).